The primary structure comprises 130 residues: Probable 15 kDa heat shock protein (130 aa).

Residues 21-130 form the sHSP domain; sequence ERVRILAPRV…LTKKIEVRSE (110 aa).

It belongs to the small heat shock protein (HSP20) family.

This Leptospira interrogans serogroup Icterohaemorrhagiae serovar Lai (strain 56601) protein is Probable 15 kDa heat shock protein (hsp15).